The following is a 300-amino-acid chain: 4-hydroxy-tetrahydrodipicolinate synthase (300 aa).

Position 45 (Thr-45) interacts with pyruvate. Tyr-140 functions as the Proton donor/acceptor in the catalytic mechanism. Lys-169 (schiff-base intermediate with substrate) is an active-site residue. Position 210 (Val-210) interacts with pyruvate.

This sequence belongs to the DapA family. As to quaternary structure, homotetramer; dimer of dimers.

It is found in the cytoplasm. The catalysed reaction is L-aspartate 4-semialdehyde + pyruvate = (2S,4S)-4-hydroxy-2,3,4,5-tetrahydrodipicolinate + H2O + H(+). The protein operates within amino-acid biosynthesis; L-lysine biosynthesis via DAP pathway; (S)-tetrahydrodipicolinate from L-aspartate: step 3/4. Functionally, catalyzes the condensation of (S)-aspartate-beta-semialdehyde [(S)-ASA] and pyruvate to 4-hydroxy-tetrahydrodipicolinate (HTPA). This Helicobacter acinonychis (strain Sheeba) protein is 4-hydroxy-tetrahydrodipicolinate synthase.